We begin with the raw amino-acid sequence, 399 residues long: Acetylornithine aminotransferase (399 aa).

Pyridoxal 5'-phosphate contacts are provided by residues 99–100 (GA) and Phe-132. Arg-135 serves as a coordination point for N(2)-acetyl-L-ornithine. Residue 217–220 (DEVQ) participates in pyridoxal 5'-phosphate binding. The residue at position 246 (Lys-246) is an N6-(pyridoxal phosphate)lysine. Position 274 (Thr-274) interacts with N(2)-acetyl-L-ornithine. Thr-275 lines the pyridoxal 5'-phosphate pocket.

This sequence belongs to the class-III pyridoxal-phosphate-dependent aminotransferase family. ArgD subfamily. Homodimer. It depends on pyridoxal 5'-phosphate as a cofactor.

The protein localises to the cytoplasm. The enzyme catalyses N(2)-acetyl-L-ornithine + 2-oxoglutarate = N-acetyl-L-glutamate 5-semialdehyde + L-glutamate. It participates in amino-acid biosynthesis; L-arginine biosynthesis; N(2)-acetyl-L-ornithine from L-glutamate: step 4/4. In Agrobacterium fabrum (strain C58 / ATCC 33970) (Agrobacterium tumefaciens (strain C58)), this protein is Acetylornithine aminotransferase.